The chain runs to 296 residues: MAHVLCNRARLVSYLPGFCSLVKRVINPRAFSTAGSSGSDESHVATAPPDICSRTVWPDETMGPFGPQDQRFQLPGNIGFDCHLNGTASQKKSQAHKTLPDVLAEPLSTERHEFVMAQYVNEFQDSDAPVEQEINSAETYFESAKVECAIQTCPELLRRDFESLFPEVANSKLMILTVTQKTENDMTVWSEEVEVEREVLLEKFISGAKEICYALRAEGYWADFIDPSSGVAFFGPYTNNTLFETDERYRHLGFSVDDLGCCKVIRHSLWGTHVVVGSIFTNATADSSIMRKLSGN.

The N-terminal 38 residues, 1–38 (MAHVLCNRARLVSYLPGFCSLVKRVINPRAFSTAGSSG), are a transit peptide targeting the mitochondrion. An N6-acetyllysine modification is found at K203.

Heterodimer with MMACHC. Forms a multiprotein complex with MMACHC, MTR and MTRR.

Its subcellular location is the cytoplasm. The protein resides in the mitochondrion. Involved in cobalamin metabolism and trafficking. Plays a role in regulating the biosynthesis and the proportion of two coenzymes, methylcob(III)alamin (MeCbl) and 5'-deoxyadenosylcobalamin (AdoCbl). Promotes oxidation of cob(II)alamin bound to MMACHC. The processing of cobalamin in the cytosol occurs in a multiprotein complex composed of at least MMACHC, MMADHC, MTRR (methionine synthase reductase) and MTR (methionine synthase) which may contribute to shuttle safely and efficiently cobalamin towards MTR in order to produce methionine. The sequence is that of Cobalamin trafficking protein CblD from Mus musculus (Mouse).